A 252-amino-acid polypeptide reads, in one-letter code: MSLATLETRLDHRFGNAALLEQALTHRSHSARHNERLEFLGDSVLNFVVAAMLFERFPKLDEGDLSRLRANLVKQASLADIGQRLELSQYLRLGEGELKSGGFRRPSILADAVEAIFGAAFLDGGFDTARKVIVRQYQPVLASVDPKTLGKDAKTLLQEFLQGRKLALPLYTVVATHGAAHSQQFEVECAIPALEIKVVAPGASRRAAEQSAAKLALEAAQAASPARAVRKQGKARKAAQLSLPVAVAQEVK.

One can recognise an RNase III domain in the interval 3–125 (LATLETRLDH…IFGAAFLDGG (123 aa)). E38 is a binding site for Mg(2+). D42 is an active-site residue. 2 residues coordinate Mg(2+): D111 and E114. Residue E114 is part of the active site. In terms of domain architecture, DRBM spans 152–222 (DAKTLLQEFL…AKLALEAAQA (71 aa)).

Belongs to the ribonuclease III family. In terms of assembly, homodimer. Mg(2+) serves as cofactor.

The protein resides in the cytoplasm. It carries out the reaction Endonucleolytic cleavage to 5'-phosphomonoester.. Digests double-stranded RNA. Involved in the processing of primary rRNA transcript to yield the immediate precursors to the large and small rRNAs (23S and 16S). Processes some mRNAs, and tRNAs when they are encoded in the rRNA operon. Processes pre-crRNA and tracrRNA of type II CRISPR loci if present in the organism. The polypeptide is Ribonuclease 3 (Bordetella petrii (strain ATCC BAA-461 / DSM 12804 / CCUG 43448)).